Reading from the N-terminus, the 236-residue chain is Phosphoribosylaminoimidazole-succinocarboxamide synthase (236 aa).

The protein belongs to the SAICAR synthetase family.

It carries out the reaction 5-amino-1-(5-phospho-D-ribosyl)imidazole-4-carboxylate + L-aspartate + ATP = (2S)-2-[5-amino-1-(5-phospho-beta-D-ribosyl)imidazole-4-carboxamido]succinate + ADP + phosphate + 2 H(+). It functions in the pathway purine metabolism; IMP biosynthesis via de novo pathway; 5-amino-1-(5-phospho-D-ribosyl)imidazole-4-carboxamide from 5-amino-1-(5-phospho-D-ribosyl)imidazole-4-carboxylate: step 1/2. This is Phosphoribosylaminoimidazole-succinocarboxamide synthase from Rickettsia felis (strain ATCC VR-1525 / URRWXCal2) (Rickettsia azadi).